A 513-amino-acid chain; its full sequence is Histidine ammonia-lyase (513 aa).

A cross-link (5-imidazolinone (Ala-Gly)) is located at residues 142–144 (ASG). Ser143 bears the 2,3-didehydroalanine (Ser) mark.

This sequence belongs to the PAL/histidase family. In terms of processing, contains an active site 4-methylidene-imidazol-5-one (MIO), which is formed autocatalytically by cyclization and dehydration of residues Ala-Ser-Gly.

The protein localises to the cytoplasm. It carries out the reaction L-histidine = trans-urocanate + NH4(+). The protein operates within amino-acid degradation; L-histidine degradation into L-glutamate; N-formimidoyl-L-glutamate from L-histidine: step 1/3. In Mesorhizobium japonicum (strain LMG 29417 / CECT 9101 / MAFF 303099) (Mesorhizobium loti (strain MAFF 303099)), this protein is Histidine ammonia-lyase.